The primary structure comprises 736 residues: DNA topoisomerase 1 (736 aa).

The region spanning 2–113 (KHLIIVESPA…SYPRIVFHEI (112 aa)) is the Toprim domain. Residues Glu-8 and Asp-82 each coordinate Mg(2+). Residues 129–552 (DMSKVNAQQA…DFYYPFMDKI (424 aa)) form the Topo IA-type catalytic domain. The interval 163–168 (SAGRVQ) is interaction with DNA. Residue Tyr-297 is the O-(5'-phospho-DNA)-tyrosine intermediate of the active site. C4-type zinc fingers lie at residues 572-598 (CPKC…YPKC), 616-642 (CEKC…YPEC), 663-689 (CPEC…YPKC), and 702-725 (CEKC…CIKC).

This sequence belongs to the type IA topoisomerase family. In terms of assembly, monomer. Requires Mg(2+) as cofactor.

It carries out the reaction ATP-independent breakage of single-stranded DNA, followed by passage and rejoining.. Functionally, releases the supercoiling and torsional tension of DNA, which is introduced during the DNA replication and transcription, by transiently cleaving and rejoining one strand of the DNA duplex. Introduces a single-strand break via transesterification at a target site in duplex DNA. The scissile phosphodiester is attacked by the catalytic tyrosine of the enzyme, resulting in the formation of a DNA-(5'-phosphotyrosyl)-enzyme intermediate and the expulsion of a 3'-OH DNA strand. The free DNA strand then undergoes passage around the unbroken strand, thus removing DNA supercoils. Finally, in the religation step, the DNA 3'-OH attacks the covalent intermediate to expel the active-site tyrosine and restore the DNA phosphodiester backbone. In Helicobacter pylori (strain ATCC 700392 / 26695) (Campylobacter pylori), this protein is DNA topoisomerase 1.